The following is a 160-amino-acid chain: Ribosomal RNA large subunit methyltransferase H (160 aa).

S-adenosyl-L-methionine-binding positions include L77, G109, and 128–133 (FGRITL).

This sequence belongs to the RNA methyltransferase RlmH family. In terms of assembly, homodimer.

The protein localises to the cytoplasm. It catalyses the reaction pseudouridine(1915) in 23S rRNA + S-adenosyl-L-methionine = N(3)-methylpseudouridine(1915) in 23S rRNA + S-adenosyl-L-homocysteine + H(+). Its function is as follows. Specifically methylates the pseudouridine at position 1915 (m3Psi1915) in 23S rRNA. The protein is Ribosomal RNA large subunit methyltransferase H of Oenococcus oeni (strain ATCC BAA-331 / PSU-1).